A 485-amino-acid chain; its full sequence is Glutamyl-tRNA(Gln) amidotransferase subunit A (485 aa).

Residues Lys-79 and Ser-154 each act as charge relay system in the active site. The active-site Acyl-ester intermediate is the Ser-178.

The protein belongs to the amidase family. GatA subfamily. Heterotrimer of A, B and C subunits.

The catalysed reaction is L-glutamyl-tRNA(Gln) + L-glutamine + ATP + H2O = L-glutaminyl-tRNA(Gln) + L-glutamate + ADP + phosphate + H(+). Its function is as follows. Allows the formation of correctly charged Gln-tRNA(Gln) through the transamidation of misacylated Glu-tRNA(Gln) in organisms which lack glutaminyl-tRNA synthetase. The reaction takes place in the presence of glutamine and ATP through an activated gamma-phospho-Glu-tRNA(Gln). The protein is Glutamyl-tRNA(Gln) amidotransferase subunit A of Desulforamulus reducens (strain ATCC BAA-1160 / DSM 100696 / MI-1) (Desulfotomaculum reducens).